A 159-amino-acid chain; its full sequence is Ribosomal RNA large subunit methyltransferase H (159 aa).

Residues glycine 108 and 127–132 (FSKMTF) each bind S-adenosyl-L-methionine.

It belongs to the RNA methyltransferase RlmH family. Homodimer.

The protein resides in the cytoplasm. It carries out the reaction pseudouridine(1915) in 23S rRNA + S-adenosyl-L-methionine = N(3)-methylpseudouridine(1915) in 23S rRNA + S-adenosyl-L-homocysteine + H(+). Specifically methylates the pseudouridine at position 1915 (m3Psi1915) in 23S rRNA. The sequence is that of Ribosomal RNA large subunit methyltransferase H from Clostridium perfringens (strain ATCC 13124 / DSM 756 / JCM 1290 / NCIMB 6125 / NCTC 8237 / Type A).